The following is a 336-amino-acid chain: Glucokinase (336 aa).

ATP is bound at residue 12 to 17 (ADIGGT).

It belongs to the bacterial glucokinase family.

It localises to the cytoplasm. The catalysed reaction is D-glucose + ATP = D-glucose 6-phosphate + ADP + H(+). This chain is Glucokinase, found in Helicobacter acinonychis (strain Sheeba).